The chain runs to 475 residues: Ribulose bisphosphate carboxylase large chain (475 aa).

Positions 1-2 (MS) are excised as a propeptide. N-acetylproline is present on proline 3. Lysine 14 carries the post-translational modification N6,N6,N6-trimethyllysine. Substrate contacts are provided by asparagine 123 and threonine 173. Catalysis depends on lysine 175, which acts as the Proton acceptor. Position 177 (lysine 177) interacts with substrate. Positions 201, 203, and 204 each coordinate Mg(2+). Lysine 201 is modified (N6-carboxylysine). The Proton acceptor role is filled by histidine 294. Positions 295, 327, and 379 each coordinate substrate.

This sequence belongs to the RuBisCO large chain family. Type I subfamily. As to quaternary structure, heterohexadecamer of 8 large chains and 8 small chains; disulfide-linked. The disulfide link is formed within the large subunit homodimers. The cofactor is Mg(2+). Post-translationally, the disulfide bond which can form in the large chain dimeric partners within the hexadecamer appears to be associated with oxidative stress and protein turnover.

Its subcellular location is the plastid. It is found in the chloroplast. It carries out the reaction 2 (2R)-3-phosphoglycerate + 2 H(+) = D-ribulose 1,5-bisphosphate + CO2 + H2O. The catalysed reaction is D-ribulose 1,5-bisphosphate + O2 = 2-phosphoglycolate + (2R)-3-phosphoglycerate + 2 H(+). Its function is as follows. RuBisCO catalyzes two reactions: the carboxylation of D-ribulose 1,5-bisphosphate, the primary event in carbon dioxide fixation, as well as the oxidative fragmentation of the pentose substrate in the photorespiration process. Both reactions occur simultaneously and in competition at the same active site. This Bouvardia ternifolia (Firecrackerbush) protein is Ribulose bisphosphate carboxylase large chain.